A 1032-amino-acid polypeptide reads, in one-letter code: Vacuolar membrane protease (1032 aa).

The Cytoplasmic segment spans residues M1–P11. The chain crosses the membrane as a helical span at residues G12–V32. At H33–L426 the chain is on the vacuolar side. Residues N50 and N142 are each glycosylated (N-linked (GlcNAc...) asparagine). Positions 207 and 219 each coordinate Zn(2+). E253 functions as the Proton acceptor in the catalytic mechanism. Residues E254, E279, and H352 each contribute to the Zn(2+) site. Residues F427 to I447 traverse the membrane as a helical segment. At L448–R482 the chain is on the cytoplasmic side. Residues F483 to K503 form a helical membrane-spanning segment. The Vacuolar segment spans residues F504 to S511. Residues S512–M532 traverse the membrane as a helical segment. Over R533–R545 the chain is Cytoplasmic. The helical transmembrane segment at G546–A566 threads the bilayer. Topologically, residues E567–A573 are vacuolar. Residues A574–L594 traverse the membrane as a helical segment. At E595 to W708 the chain is on the cytoplasmic side. Basic and acidic residues predominate over residues R616 to P631. Residues R616–R666 are disordered. Residues E632–T649 show a composition bias toward acidic residues. Residues I709–V729 form a helical membrane-spanning segment. Residues A730–L745 lie on the Vacuolar side of the membrane. Residues V746–I766 traverse the membrane as a helical segment. Topologically, residues H767–V773 are cytoplasmic. Residues P774 to F794 traverse the membrane as a helical segment. Residues S795 to V1032 are Vacuolar-facing. N-linked (GlcNAc...) asparagine glycans are attached at residues N812 and N884.

The protein belongs to the peptidase M28 family. Zn(2+) serves as cofactor.

It localises to the vacuole membrane. Its function is as follows. May be involved in vacuolar sorting and osmoregulation. The protein is Vacuolar membrane protease of Fusarium vanettenii (strain ATCC MYA-4622 / CBS 123669 / FGSC 9596 / NRRL 45880 / 77-13-4) (Fusarium solani subsp. pisi).